The primary structure comprises 947 residues: Plasma membrane ATPase 2 (947 aa).

Residues Met-1–Val-103 form a disordered region. Over Met-1 to Lys-144 the chain is Cytoplasmic. Positions Lys-7 to Asp-22 are enriched in basic and acidic residues. Over residues Pro-26–Ala-61 the composition is skewed to low complexity. Residues Asp-62–Ile-74 are compositionally biased toward acidic residues. Residues Phe-145–Ala-165 form a helical membrane-spanning segment. Residues Gly-166 to Asp-169 are Extracellular-facing. The chain crosses the membrane as a helical span at residues Trp-170 to Ile-189. Topologically, residues Gln-190–Asn-320 are cytoplasmic. Residues Gly-321–Phe-342 form a helical membrane-spanning segment. At Tyr-343 to Arg-353 the chain is on the extracellular side. The helical transmembrane segment at Tyr-354–Ala-376 threads the bilayer. Residues Val-377–Ile-748 lie on the Cytoplasmic side of the membrane. Asp-407 functions as the 4-aspartylphosphate intermediate in the catalytic mechanism. Positions 663 and 667 each coordinate Mg(2+). The helical transmembrane segment at Asn-749–Tyr-767 threads the bilayer. Over Asp-768 to Arg-783 the chain is Extracellular. A helical transmembrane segment spans residues Leu-784 to Leu-803. The Cytoplasmic segment spans residues Thr-804–Gln-853. Residues Leu-854 to Trp-874 traverse the membrane as a helical segment. At Ser-875–Arg-886 the chain is on the extracellular side. A helical transmembrane segment spans residues Val-887–Tyr-903. Topologically, residues Ile-904–Ser-947 are cytoplasmic.

It belongs to the cation transport ATPase (P-type) (TC 3.A.3) family. Type IIIA subfamily.

It is found in the cell membrane. The catalysed reaction is ATP + H2O + H(+)(in) = ADP + phosphate + 2 H(+)(out). In terms of biological role, the plasma membrane ATPase of plants and fungi is a hydrogen ion pump. The proton gradient it generates drives the active transport of nutrients by H(+)-symport. The resulting external acidification and/or internal alkinization may mediate growth responses. The chain is Plasma membrane ATPase 2 (PMA2) from Saccharomyces cerevisiae (strain ATCC 204508 / S288c) (Baker's yeast).